We begin with the raw amino-acid sequence, 92 residues long: Transcription factor S4 (92 aa).

The tract at residues 1–31 (MRFCPKCGSFLKVKGNKMVCSKCGYSDHDVE) is ZR-N. Residues Cys4, Cys7, Cys20, and Cys23 each contribute to the Zn(2+) site. The tract at residues 32–56 (KVILKENVAHENDKTIIADGETIEG) is flexible linker. The ZR-C stretch occupies residues 55 to 92 (EGRVAISLCPRCGSVRAILLNKKKRLYRCMTCNFVYNI). Zn(2+)-binding residues include Cys63 and Cys66. Active-site residues include Lys76, Lys77, and Lys78. Positions 83 and 86 each coordinate Zn(2+).

Belongs to the archaeal RpoM/eukaryotic RPA12/RPB9/RPC11 RNA polymerase family. In terms of assembly, interacts with RNA polymerase. Zn(2+) is required as a cofactor.

A potent inhibitor of RNA polymerase (RNAP) probably involved in viral defense. Destabilizes the transcription pre-initiation complex of TBP, TFB, DNA and RNAP, inhibits abortive transcription initiation, productive initiation and transcription elongation. Increases the RNAP KM for NTPs about 50-fold. Overexpression of TFS1-tip4 (TFS1 with the active tip of this protein, phenocopies this protein) in S.acidocaldarius MW001 leads to severe growth inhibition. When bound to RNAP induces conformational changes that widen the DNA-binding channel, probably destabilizing the interaction of DNA with RNAP. The protein is Transcription factor S4 of Saccharolobus solfataricus (strain ATCC 35092 / DSM 1617 / JCM 11322 / P2) (Sulfolobus solfataricus).